The chain runs to 355 residues: Phosphate acyltransferase (355 aa).

It belongs to the PlsX family. Homodimer. Probably interacts with PlsY.

It localises to the cytoplasm. It carries out the reaction a fatty acyl-[ACP] + phosphate = an acyl phosphate + holo-[ACP]. It functions in the pathway lipid metabolism; phospholipid metabolism. Its function is as follows. Catalyzes the reversible formation of acyl-phosphate (acyl-PO(4)) from acyl-[acyl-carrier-protein] (acyl-ACP). This enzyme utilizes acyl-ACP as fatty acyl donor, but not acyl-CoA. The chain is Phosphate acyltransferase from Azorhizobium caulinodans (strain ATCC 43989 / DSM 5975 / JCM 20966 / LMG 6465 / NBRC 14845 / NCIMB 13405 / ORS 571).